A 247-amino-acid polypeptide reads, in one-letter code: UPF0246 protein LSL_1719 (247 aa).

This sequence belongs to the UPF0246 family.

The polypeptide is UPF0246 protein LSL_1719 (Ligilactobacillus salivarius (strain UCC118) (Lactobacillus salivarius)).